We begin with the raw amino-acid sequence, 358 residues long: Histamine H2 receptor (358 aa).

At 1-22 the chain is on the extracellular side; it reads MEPNGTVHSCCLDSMALKVTIS. N-linked (GlcNAc...) asparagine glycosylation is present at Asn4. A helical membrane pass occupies residues 23–44; that stretch reads VVLTTLILITIAGNVVVCLAVS. The Cytoplasmic portion of the chain corresponds to 45 to 57; it reads LNRRLRSLTNCFI. A helical membrane pass occupies residues 58–81; that stretch reads VSLAATDLLLGLLVLPFSAIYQLS. Residues 82 to 92 are Extracellular-facing; it reads FTWSFGHVFCN. Cys91 and Cys173 are oxidised to a cystine. Residues 93 to 114 form a helical membrane-spanning segment; it reads IYTSLDVMLCTASILNLFMISL. At 115-134 the chain is on the cytoplasmic side; sequence DRYCAVTDPLRYPVLVTPVR. The helical transmembrane segment at 135 to 159 threads the bilayer; that stretch reads VAISLVFIWVISITLSFLSIHLGWN. At 160 to 179 the chain is on the extracellular side; the sequence is SRNGTRGGNDTFKCKVQVNE. A helical membrane pass occupies residues 180-203; that stretch reads VYGLVDGLVTFYLPLLIMCVTYYR. The Cytoplasmic portion of the chain corresponds to 204-233; sequence IFKIAREQAKRINHISSWKAATIREHKATV. A helical membrane pass occupies residues 234–257; it reads TLAAVMGAFIICWFPYFTAFVYRG. Topologically, residues 258–266 are extracellular; the sequence is LRGDDAINE. Residues 267–288 form a helical membrane-spanning segment; that stretch reads AVEGIVLWLGYANSALNPILYA. Topologically, residues 289–358 are cytoplasmic; sequence ALNRDFRTAY…LTHPQGNPIR (70 aa). A lipid anchor (S-palmitoyl cysteine) is attached at Cys304.

It belongs to the G-protein coupled receptor 1 family.

It is found in the cell membrane. Its function is as follows. The H2 subclass of histamine receptors mediates gastric acid secretion. The activity of this receptor is mediated by G proteins which activate adenylyl cyclase. The chain is Histamine H2 receptor (Hrh2) from Rattus norvegicus (Rat).